A 520-amino-acid chain; its full sequence is mRNA-capping enzyme subunit beta (520 aa).

Positions methionine 1–aspartate 185 are disordered. Polar residues-rich tracts occupy residues proline 11 to aspartate 21 and isoleucine 44 to threonine 56. A compositionally biased stretch (low complexity) spans serine 92 to proline 108. Basic and acidic residues-rich tracts occupy residues proline 126–glutamate 135 and lysine 149–proline 176.

The protein belongs to the fungal TPase family. In terms of assembly, heterodimer. The mRNA-capping enzyme is composed of two separate chains alpha and beta, respectively a mRNA guanylyltransferase and an mRNA 5'-triphosphate monophosphatase. Requires Mg(2+) as cofactor.

The protein resides in the nucleus. It carries out the reaction a 5'-end triphospho-ribonucleoside in mRNA + H2O = a 5'-end diphospho-ribonucleoside in mRNA + phosphate + H(+). Its function is as follows. First step of mRNA capping. Converts the 5'-triphosphate end of a nascent mRNA chain into a diphosphate end. This Candida albicans (strain SC5314 / ATCC MYA-2876) (Yeast) protein is mRNA-capping enzyme subunit beta (CET1).